Consider the following 244-residue polypeptide: Venom nerve growth factor 3 (244 aa).

A signal peptide spans 1 to 18; the sequence is MSMLCYTLIIAFLIGIWA. A propeptide spanning residues 19 to 125 is cleaved from the precursor; sequence APKSEDNVPL…TLNRNIRAKR (107 aa). Positions 47-66 are enriched in basic and acidic residues; that stretch reads GLKTSRNTDQRHPAPKKAED. The disordered stretch occupies residues 47-67; the sequence is GLKTSRNTDQRHPAPKKAEDQ. 3 disulfide bridges follow: Cys-139–Cys-205, Cys-181–Cys-233, and Cys-193–Cys-235.

Belongs to the NGF-beta family. As to quaternary structure, homodimer; non-covalently linked. As to expression, expressed by the venom gland.

It localises to the secreted. Its function is as follows. Nerve growth factor is important for the development and maintenance of the sympathetic and sensory nervous systems. It stimulates division and differentiation of sympathetic and embryonic sensory neurons as well as basal forebrain cholinergic neurons in the brain. Its relevance in the snake venom is not clear. However, it has been shown to inhibit metalloproteinase-dependent proteolysis of platelet glycoprotein Ib alpha, suggesting a metalloproteinase inhibition to prevent metalloprotease autodigestion and/or protection against prey proteases. Binds a lipid between the two protein chains in the homodimer. The lipid-bound form promotes histamine relase from mouse mast cells, contrary to the lipid-free form. This chain is Venom nerve growth factor 3, found in Notechis scutatus scutatus (Mainland tiger snake).